A 283-amino-acid chain; its full sequence is Pantothenate synthetase (283 aa).

30–37 (MGNLHDGH) serves as a coordination point for ATP. His-37 acts as the Proton donor in catalysis. Gln-61 provides a ligand contact to (R)-pantoate. Gln-61 serves as a coordination point for beta-alanine. An ATP-binding site is contributed by 149-152 (GEKD). Gln-155 serves as a coordination point for (R)-pantoate. ATP is bound at residue 186-189 (LSSR).

Belongs to the pantothenate synthetase family. Homodimer.

It is found in the cytoplasm. The enzyme catalyses (R)-pantoate + beta-alanine + ATP = (R)-pantothenate + AMP + diphosphate + H(+). Its pathway is cofactor biosynthesis; (R)-pantothenate biosynthesis; (R)-pantothenate from (R)-pantoate and beta-alanine: step 1/1. In terms of biological role, catalyzes the condensation of pantoate with beta-alanine in an ATP-dependent reaction via a pantoyl-adenylate intermediate. The protein is Pantothenate synthetase of Escherichia fergusonii (strain ATCC 35469 / DSM 13698 / CCUG 18766 / IAM 14443 / JCM 21226 / LMG 7866 / NBRC 102419 / NCTC 12128 / CDC 0568-73).